A 232-amino-acid chain; its full sequence is Phosphatidylserine decarboxylase proenzyme (232 aa).

Catalysis depends on serine 190, which acts as the Schiff-base intermediate with substrate; via pyruvic acid. At serine 190 the chain carries Pyruvic acid (Ser); by autocatalysis.

Belongs to the phosphatidylserine decarboxylase family. PSD-A subfamily. In terms of assembly, heterodimer of a large membrane-associated beta subunit and a small pyruvoyl-containing alpha subunit. The cofactor is pyruvate. Post-translationally, is synthesized initially as an inactive proenzyme. Formation of the active enzyme involves a self-maturation process in which the active site pyruvoyl group is generated from an internal serine residue via an autocatalytic post-translational modification. Two non-identical subunits are generated from the proenzyme in this reaction, and the pyruvate is formed at the N-terminus of the alpha chain, which is derived from the carboxyl end of the proenzyme. The post-translation cleavage follows an unusual pathway, termed non-hydrolytic serinolysis, in which the side chain hydroxyl group of the serine supplies its oxygen atom to form the C-terminus of the beta chain, while the remainder of the serine residue undergoes an oxidative deamination to produce ammonia and the pyruvoyl prosthetic group on the alpha chain.

The protein resides in the cell membrane. The enzyme catalyses a 1,2-diacyl-sn-glycero-3-phospho-L-serine + H(+) = a 1,2-diacyl-sn-glycero-3-phosphoethanolamine + CO2. Its pathway is phospholipid metabolism; phosphatidylethanolamine biosynthesis; phosphatidylethanolamine from CDP-diacylglycerol: step 2/2. Functionally, catalyzes the formation of phosphatidylethanolamine (PtdEtn) from phosphatidylserine (PtdSer). The sequence is that of Phosphatidylserine decarboxylase proenzyme from Bradyrhizobium sp. (strain BTAi1 / ATCC BAA-1182).